A 324-amino-acid polypeptide reads, in one-letter code: Tetrachlorobenzoquinone reductase (324 aa).

An FAD-binding FR-type domain is found at 5-107 (VSTIDMTVTQ…VPPANNFALV (103 aa)). A 2Fe-2S ferredoxin-type domain is found at 238-324 (FTVVLARRSG…SKSPRLVLDI (87 aa)). The [2Fe-2S] cluster site is built by cysteine 273, cysteine 278, cysteine 281, and cysteine 311.

Belongs to the PDR/VanB family. In terms of assembly, homotrimer. FMN is required as a cofactor. Requires [2Fe-2S] cluster as cofactor.

The enzyme catalyses 2,3,5,6-tetrachlorohydroquinone + NAD(+) + H(+) = 2,3,5,6-tetrachloro-1,4-benzoquinone + NADH. Its pathway is xenobiotic degradation; pentachlorophenol degradation. Its activity is regulated as follows. In vitro, activated by tetrachlorohydroquinone (TCHQ) at low concentrations and inhibited at high concentrations (above 200 uM). However, PcpD would only be stimulated by tetrachlorohydroquinone (TCHQ) under in vivo conditions due to the toxicity of tetrachlorohydroquinone (TCHQ). Competitively inhibited by pentachlorophenol (PCP) in a concentration-dependent manner. PcpD is regulated by tetrachlorohydroquinone (TCHQ) and pentachlorophenol (PCP) using a mechanism, which maintains tetrachlorobenzoquinone at a level that would neither significantly decrease the biodegradation of pentachlorophenol (PCP) nor cause cytotoxicity in cells. In terms of biological role, involved in the degradation of the xenobiocide pentachlorophenol (PCP). Catalyzes the reduction of tetrachlorobenzoquinone (TCBQ) to yield tetrachlorohydroquinone (TCHQ). Also able to reduce 2,6-dichloroindophenol (DCIP). The polypeptide is Tetrachlorobenzoquinone reductase (Sphingobium chlorophenolicum).